We begin with the raw amino-acid sequence, 176 residues long: NAD(P)H-quinone oxidoreductase subunit 6, chloroplastic (176 aa).

The next 5 membrane-spanning stretches (helical) occupy residues 10 to 30, 32 to 52, 63 to 83, 92 to 112, and 152 to 172; these read FLLV…VLLT, PIFS…LYIL, LLIY…FMNG, LWTV…ISLI, and FFLP…GAIV.

Belongs to the complex I subunit 6 family. As to quaternary structure, NDH is composed of at least 16 different subunits, 5 of which are encoded in the nucleus.

It localises to the plastid. Its subcellular location is the chloroplast thylakoid membrane. It catalyses the reaction a plastoquinone + NADH + (n+1) H(+)(in) = a plastoquinol + NAD(+) + n H(+)(out). It carries out the reaction a plastoquinone + NADPH + (n+1) H(+)(in) = a plastoquinol + NADP(+) + n H(+)(out). In terms of biological role, NDH shuttles electrons from NAD(P)H:plastoquinone, via FMN and iron-sulfur (Fe-S) centers, to quinones in the photosynthetic chain and possibly in a chloroplast respiratory chain. The immediate electron acceptor for the enzyme in this species is believed to be plastoquinone. Couples the redox reaction to proton translocation, and thus conserves the redox energy in a proton gradient. The chain is NAD(P)H-quinone oxidoreductase subunit 6, chloroplastic (ndhG) from Lotus japonicus (Lotus corniculatus var. japonicus).